The sequence spans 521 residues: MLRPAALAAARLVLRQGRRLLSAAPTQAVPAPNQQPEIFYNQIFINNEWHDAISKKTFPTVNPSTGDVICHVAEGDKEDVDRAVEAARAAFQLGSPWRRLDASDRGRLLNRLADLIERDRTYLAALETLDNGKPYVISYLVDLDMVLKCLRYYAGWADKYHGKTLPIDGDYFSYTRHEPVGVCGQIIPWNFPLLMQAWKLGPALATGNVVVMKVSEQTPLTALYVANLIKEAGFPPGVVNIVPGYGPTAGAAIASHEDVDKVAFTGSTEVGHLIQVAAGKSNLKRVTLELGGKSPNIIMSDADMDWAVEQAHFALFFNQGQCCCAGSRTFVQEDIYAEFVERSVARARSRVVGNPFDSRTEQGPQIDETQFKKILGYIKSGKEEGAKLLCGGGAAADRGYFIQPTVFGDVQDGMTIAKEEIFGPVMQILKFKTIEEVIGRANNSKYGLAAAVFTKDLDKANYLSQALQAGTVWVNCYDVFGAQSPFGGYKLSGSGRELGEYGLQAYTEVKTVTVKVPQKNS.

The N-terminal 21 residues, 1 to 21, are a transit peptide targeting the mitochondrion; it reads MLRPAALAAARLVLRQGRRLL. The SIFI-degron motif lies at 13 to 28; that stretch reads VLRQGRRLLSAAPTQA. An N6-acetyllysine mark is found at Lys56, Lys77, and Lys163. 266 to 271 lines the NAD(+) pocket; sequence GSTEVG. Glu289 functions as the Proton acceptor in the catalytic mechanism. Residue Cys323 is the Nucleophile of the active site. Lys372, Lys379, Lys387, Lys430, Lys432, Lys445, and Lys455 each carry N6-acetyllysine.

Belongs to the aldehyde dehydrogenase family. Homotetramer. In response to mitochondrial stress, the precursor protein is ubiquitinated by the SIFI complex in the cytoplasm before mitochondrial import, leading to its degradation. Within the SIFI complex, UBR4 initiates ubiquitin chain that are further elongated or branched by KCMF1.

It localises to the mitochondrion matrix. The enzyme catalyses an aldehyde + NAD(+) + H2O = a carboxylate + NADH + 2 H(+). It participates in alcohol metabolism; ethanol degradation; acetate from ethanol: step 2/2. In terms of biological role, required for clearance of cellular formaldehyde, a cytotoxic and carcinogenic metabolite that induces DNA damage. In Sus scrofa (Pig), this protein is Aldehyde dehydrogenase, mitochondrial (ALDH2).